The following is a 297-amino-acid chain: uncharacterized protein (297 aa).

The active site involves E46.

Belongs to the PhzF family. Homodimer and homotetramer.

This is an uncharacterized protein from Escherichia coli O157:H7.